The following is a 146-amino-acid chain: Pseudoazurin (146 aa).

Residues 1-23 form the signal peptide; the sequence is MRNIAIKFAAAGILAMLAAPALA. A Plastocyanin-like domain is found at 28–116; it reads VHMLNKGAEG…MGMIALIAVG (89 aa). Cu cation-binding residues include His63, Cys101, His104, and Met109.

Cu cation is required as a cofactor.

The protein resides in the periplasm. Its function is as follows. This soluble electron transfer copper protein is required for the inactivation of copper-containing nitrite reductase in the presence of oxygen. Serves as a direct electron donor to the nitrite reductase. The protein is Pseudoazurin of Alcaligenes faecalis.